Here is a 252-residue protein sequence, read N- to C-terminus: Oncostatin-M (252 aa).

The signal sequence occupies residues 1 to 25 (MGVLLTQRTLLSLVLALLFPSMASM). Cystine bridges form between Cys-31–Cys-152 and Cys-74–Cys-192. Residue Asn-100 is glycosylated (N-linked (GlcNAc...) asparagine). 2 disordered regions span residues 162–184 (TAEPTKAGRGASQPPTPTPASDA) and 213–252 (GESPNRSRRHSPHQALRKGVRRTRPSRKGKRLMTRGQLPR). N-linked (GlcNAc...) asparagine glycosylation is present at Asn-217. A compositionally biased stretch (basic residues) spans 218–245 (RSRRHSPHQALRKGVRRTRPSRKGKRLM). Positions 222 to 252 (HSPHQALRKGVRRTRPSRKGKRLMTRGQLPR) are excised as a propeptide.

The protein belongs to the LIF/OSM family. In terms of processing, propeptide processing is not important for receptor binding activity but may be important growth-inhibitory activity.

Its subcellular location is the secreted. In terms of biological role, growth regulator. Inhibits the proliferation of a number of tumor cell lines. Stimulates proliferation of AIDS-KS cells. It regulates cytokine production, including IL-6, G-CSF and GM-CSF from endothelial cells. Uses both type I OSM receptor (heterodimers composed of LIFR and IL6ST) and type II OSM receptor (heterodimers composed of OSMR and IL6ST). Involved in the maturation of fetal hepatocytes, thereby promoting liver development and regeneration. In Homo sapiens (Human), this protein is Oncostatin-M (OSM).